A 100-amino-acid chain; its full sequence is Urease subunit gamma (100 aa).

The protein belongs to the urease gamma subunit family. Heterotrimer of UreA (gamma), UreB (beta) and UreC (alpha) subunits. Three heterotrimers associate to form the active enzyme.

The protein localises to the cytoplasm. It carries out the reaction urea + 2 H2O + H(+) = hydrogencarbonate + 2 NH4(+). It functions in the pathway nitrogen metabolism; urea degradation; CO(2) and NH(3) from urea (urease route): step 1/1. In Cyanothece sp. (strain PCC 7425 / ATCC 29141), this protein is Urease subunit gamma.